A 396-amino-acid chain; its full sequence is Elongation factor Tu (396 aa).

Positions 10–206 (KPHVNVGTIG…ALDTFIPEPT (197 aa)) constitute a tr-type G domain. The segment at 19 to 26 (GHVDHGKT) is G1. 19–26 (GHVDHGKT) is a GTP binding site. Thr26 contacts Mg(2+). The G2 stretch occupies residues 60–64 (GITIS). Residues 81–84 (DCPG) form a G3 region. Residues 81–85 (DCPGH) and 136–139 (NKAD) contribute to the GTP site. Residues 136-139 (NKAD) are G4. Positions 174–176 (SAR) are G5.

Belongs to the TRAFAC class translation factor GTPase superfamily. Classic translation factor GTPase family. EF-Tu/EF-1A subfamily. In terms of assembly, monomer.

The protein resides in the cytoplasm. The enzyme catalyses GTP + H2O = GDP + phosphate + H(+). In terms of biological role, GTP hydrolase that promotes the GTP-dependent binding of aminoacyl-tRNA to the A-site of ribosomes during protein biosynthesis. This chain is Elongation factor Tu, found in Xanthomonas oryzae pv. oryzae (strain MAFF 311018).